The chain runs to 338 residues: Ketol-acid reductoisomerase (NADP(+)) (338 aa).

In terms of domain architecture, KARI N-terminal Rossmann spans 1-181 (MKVFYDKDAD…GGGRAGIIET (181 aa)). Residues 24–27 (YGSQ), arginine 47, and serine 52 contribute to the NADP(+) site. The active site involves histidine 107. Glycine 133 is a binding site for NADP(+). The region spanning 182-327 (NFREETETDL…SKLRAMMPWI (146 aa)) is the KARI C-terminal knotted domain. Mg(2+)-binding residues include aspartate 190, glutamate 194, glutamate 226, and glutamate 230. Serine 251 serves as a coordination point for substrate.

It belongs to the ketol-acid reductoisomerase family. Requires Mg(2+) as cofactor.

The catalysed reaction is (2R)-2,3-dihydroxy-3-methylbutanoate + NADP(+) = (2S)-2-acetolactate + NADPH + H(+). The enzyme catalyses (2R,3R)-2,3-dihydroxy-3-methylpentanoate + NADP(+) = (S)-2-ethyl-2-hydroxy-3-oxobutanoate + NADPH + H(+). It functions in the pathway amino-acid biosynthesis; L-isoleucine biosynthesis; L-isoleucine from 2-oxobutanoate: step 2/4. It participates in amino-acid biosynthesis; L-valine biosynthesis; L-valine from pyruvate: step 2/4. Involved in the biosynthesis of branched-chain amino acids (BCAA). Catalyzes an alkyl-migration followed by a ketol-acid reduction of (S)-2-acetolactate (S2AL) to yield (R)-2,3-dihydroxy-isovalerate. In the isomerase reaction, S2AL is rearranged via a Mg-dependent methyl migration to produce 3-hydroxy-3-methyl-2-ketobutyrate (HMKB). In the reductase reaction, this 2-ketoacid undergoes a metal-dependent reduction by NADPH to yield (R)-2,3-dihydroxy-isovalerate. This Burkholderia mallei (strain NCTC 10229) protein is Ketol-acid reductoisomerase (NADP(+)).